The sequence spans 121 residues: Large ribosomal subunit protein uL18 (121 aa).

Residues 1 to 25 (MKIVISKPDKNKIRQKRHRRVRGKL) form a disordered region. Over residues 13–23 (IRQKRHRRVRG) the composition is skewed to basic residues.

Belongs to the universal ribosomal protein uL18 family. Part of the 50S ribosomal subunit; part of the 5S rRNA/L5/L18/L25 subcomplex. Contacts the 5S and 23S rRNAs.

In terms of biological role, this is one of the proteins that bind and probably mediate the attachment of the 5S RNA into the large ribosomal subunit, where it forms part of the central protuberance. In Streptococcus pyogenes serotype M28 (strain MGAS6180), this protein is Large ribosomal subunit protein uL18.